Reading from the N-terminus, the 128-residue chain is Sulfurtransferase TusD (128 aa).

Residue cysteine 78 is the Cysteine persulfide intermediate of the active site.

The protein belongs to the DsrE/TusD family. In terms of assembly, heterohexamer, formed by a dimer of trimers. The hexameric TusBCD complex contains 2 copies each of TusB, TusC and TusD. The TusBCD complex interacts with TusE.

It localises to the cytoplasm. Its function is as follows. Part of a sulfur-relay system required for 2-thiolation of 5-methylaminomethyl-2-thiouridine (mnm(5)s(2)U) at tRNA wobble positions. Accepts sulfur from TusA and transfers it in turn to TusE. This is Sulfurtransferase TusD from Enterobacter sp. (strain 638).